The sequence spans 583 residues: Bifunctional lycopene cyclase/phytoene synthase (583 aa).

A lycopene beta-cyclase region spans residues 1–243; that stretch reads MGFDYALVHL…IVFGQLAFDN (243 aa). The next 7 helical transmembrane spans lie at 3-23, 35-55, 75-97, 120-140, 151-171, 173-193, and 221-241; these read FDYA…LTWL, KVGY…SYLI, IPLE…YLLL, YMRL…WRCI, LILV…YQFI, ALPV…LWVV, and IEEA…QLAF. The interval 250–583 is phytoene synthase; it reads TFPHLFTGPS…MVAWRTLNSK (334 aa).

In the N-terminal section; belongs to the lycopene beta-cyclase family. It in the C-terminal section; belongs to the phytoene/squalene synthase family.

The protein resides in the membrane. The enzyme catalyses all-trans-lycopene = gamma-carotene. It carries out the reaction gamma-carotene = all-trans-beta-carotene. It catalyses the reaction 2 (2E,6E,10E)-geranylgeranyl diphosphate = 15-cis-phytoene + 2 diphosphate. Its pathway is carotenoid biosynthesis; beta-carotene biosynthesis. It functions in the pathway carotenoid biosynthesis; phytoene biosynthesis; all-trans-phytoene from geranylgeranyl diphosphate: step 1/1. Its function is as follows. Bifunctional enzyme that catalyzes the reactions from geranylgeranyl diphosphate to phytoene (phytoene synthase) and lycopene to beta-carotene via the intermediate gamma-carotene (lycopene cyclase). This Pyrenophora tritici-repentis (strain Pt-1C-BFP) (Wheat tan spot fungus) protein is Bifunctional lycopene cyclase/phytoene synthase.